Consider the following 313-residue polypeptide: MNATYRHITVLLEEAVSALAPREDGCYLDGTFGRGGHSRALLEKLGTGGRLLGFDKDPQAIQTGKALAAEDGRFVIVQRSFAELGDEVRARGLEGRVDGVLLDLGVSSPQLDDPERGFSFLNDGPLDMRMNPGQGISAAEFIASAAEEEIARVFKEYGEERFAKRMARAIVQRRQERPFERTADLAEVITVANPAWEKGKNPATRAFQGLRIHVNNELGDLERGLDAALESLAVGGRLVVISFHSLEDRIVKLFMRKHAKGEADNLPRDLPIRSKVFEPRLKLLGKPQYASEAELKANPRSRSAVMRVAEKLK.

S-adenosyl-L-methionine-binding positions include 35-37 (GGH), D55, F81, D103, and Q110.

Belongs to the methyltransferase superfamily. RsmH family.

The protein localises to the cytoplasm. It carries out the reaction cytidine(1402) in 16S rRNA + S-adenosyl-L-methionine = N(4)-methylcytidine(1402) in 16S rRNA + S-adenosyl-L-homocysteine + H(+). Specifically methylates the N4 position of cytidine in position 1402 (C1402) of 16S rRNA. The sequence is that of Ribosomal RNA small subunit methyltransferase H from Pseudomonas paraeruginosa (strain DSM 24068 / PA7) (Pseudomonas aeruginosa (strain PA7)).